We begin with the raw amino-acid sequence, 240 residues long: Probable transcriptional activator (240 aa).

Residues 17 to 28 (CTSCQARHGVVC) are essential for the oxygen-regulated activity. Residues 158-232 (RTAEEKVASL…FRHIIVPDMD (75 aa)) form the HTH crp-type domain. Positions 191–210 (RAEIADFLGLTIETVSRQMT) form a DNA-binding region, H-T-H motif.

Its function is as follows. Promotes the microaerobic and symbiotic induction of fixN, possibly by binding to the FNR consensus binding site upstream of fixN. The protein is Probable transcriptional activator (fnrN) of Rhizobium leguminosarum bv. viciae.